The primary structure comprises 145 residues: ATP synthase epsilon chain (145 aa).

This sequence belongs to the ATPase epsilon chain family. As to quaternary structure, F-type ATPases have 2 components, CF(1) - the catalytic core - and CF(0) - the membrane proton channel. CF(1) has five subunits: alpha(3), beta(3), gamma(1), delta(1), epsilon(1). CF(0) has three main subunits: a, b and c.

The protein localises to the cell membrane. Produces ATP from ADP in the presence of a proton gradient across the membrane. The protein is ATP synthase epsilon chain of Buchnera aphidicola subsp. Baizongia pistaciae (strain Bp).